The sequence spans 232 residues: tRNA1(Val) (adenine(37)-N6)-methyltransferase (232 aa).

Belongs to the methyltransferase superfamily. tRNA (adenine-N(6)-)-methyltransferase family.

It localises to the cytoplasm. The catalysed reaction is adenosine(37) in tRNA1(Val) + S-adenosyl-L-methionine = N(6)-methyladenosine(37) in tRNA1(Val) + S-adenosyl-L-homocysteine + H(+). In terms of biological role, specifically methylates the adenine in position 37 of tRNA(1)(Val) (anticodon cmo5UAC). The protein is tRNA1(Val) (adenine(37)-N6)-methyltransferase of Pseudoalteromonas translucida (strain TAC 125).